A 313-amino-acid chain; its full sequence is Porphobilinogen deaminase (313 aa).

Position 242 is an S-(dipyrrolylmethanemethyl)cysteine (C242).

This sequence belongs to the HMBS family. In terms of assembly, monomer. The cofactor is dipyrromethane.

The catalysed reaction is 4 porphobilinogen + H2O = hydroxymethylbilane + 4 NH4(+). It participates in porphyrin-containing compound metabolism; protoporphyrin-IX biosynthesis; coproporphyrinogen-III from 5-aminolevulinate: step 2/4. In terms of biological role, tetrapolymerization of the monopyrrole PBG into the hydroxymethylbilane pre-uroporphyrinogen in several discrete steps. This is Porphobilinogen deaminase from Pseudomonas fluorescens (strain ATCC BAA-477 / NRRL B-23932 / Pf-5).